The following is a 171-amino-acid chain: Galectin-related protein A (171 aa).

One can recognise a Galectin domain in the interval 38–170 (PFCGHIKGGL…INGDLQLTKL (133 aa)).

In terms of biological role, does not bind lactose, and may not bind carbohydrates. This chain is Galectin-related protein A (lgalsl-a), found in Xenopus laevis (African clawed frog).